Consider the following 473-residue polypeptide: Photosystem II CP43 reaction center protein (473 aa).

Positions 1 to 14 (MKILYSLRRFYHVE) are excised as a propeptide. Threonine 15 is subject to N-acetylthreonine. A Phosphothreonine modification is found at threonine 15. Transmembrane regions (helical) follow at residues 69-93 (LFEV…PHLA), 134-155 (LLGP…KDRN), 178-200 (KALY…RKIT), 255-275 (KPFA…LSYS), and 291-312 (WFNN…ASQA). Glutamate 367 contacts [CaMn4O5] cluster. Residues 447–471 (RARAAAAGFEKGIDRDLEPVLYMNP) traverse the membrane as a helical segment.

Belongs to the PsbB/PsbC family. PsbC subfamily. PSII is composed of 1 copy each of membrane proteins PsbA, PsbB, PsbC, PsbD, PsbE, PsbF, PsbH, PsbI, PsbJ, PsbK, PsbL, PsbM, PsbT, PsbX, PsbY, PsbZ, Psb30/Ycf12, at least 3 peripheral proteins of the oxygen-evolving complex and a large number of cofactors. It forms dimeric complexes. It depends on Binds multiple chlorophylls and provides some of the ligands for the Ca-4Mn-5O cluster of the oxygen-evolving complex. It may also provide a ligand for a Cl- that is required for oxygen evolution. PSII binds additional chlorophylls, carotenoids and specific lipids. as a cofactor.

It is found in the plastid. The protein resides in the chloroplast thylakoid membrane. One of the components of the core complex of photosystem II (PSII). It binds chlorophyll and helps catalyze the primary light-induced photochemical processes of PSII. PSII is a light-driven water:plastoquinone oxidoreductase, using light energy to abstract electrons from H(2)O, generating O(2) and a proton gradient subsequently used for ATP formation. The chain is Photosystem II CP43 reaction center protein from Hordeum vulgare (Barley).